We begin with the raw amino-acid sequence, 159 residues long: Protein-export protein SecB (159 aa).

Belongs to the SecB family. Homotetramer, a dimer of dimers. One homotetramer interacts with 1 SecA dimer.

The protein resides in the cytoplasm. Its function is as follows. One of the proteins required for the normal export of preproteins out of the cell cytoplasm. It is a molecular chaperone that binds to a subset of precursor proteins, maintaining them in a translocation-competent state. It also specifically binds to its receptor SecA. This chain is Protein-export protein SecB, found in Bartonella bacilliformis (strain ATCC 35685 / KC583 / Herrer 020/F12,63).